Reading from the N-terminus, the 92-residue chain is Acylphosphatase (92 aa).

Residues 5-92 (CIAAYVYGVV…ADFQGFSIRY (88 aa)) form the Acylphosphatase-like domain. Residues arginine 20 and asparagine 38 contribute to the active site.

It belongs to the acylphosphatase family.

It catalyses the reaction an acyl phosphate + H2O = a carboxylate + phosphate + H(+). The polypeptide is Acylphosphatase (acyP) (Serratia proteamaculans (strain 568)).